The primary structure comprises 289 residues: Probable aquaporin PIP2-6 (289 aa).

N-acetylmethionine is present on Met1. Topologically, residues 1 to 38 (MTKDELTEEESLSGKDYLDPPPVKTFEVRELKKWSFYR) are cytoplasmic. At Thr7 the chain carries Phosphothreonine. Ser11 bears the Phosphoserine mark. Residues 39–59 (AVIAEFIATLLFLYVTVLTVI) form a helical membrane-spanning segment. At 60-80 (GFKSQTDINAGGGACASVGLL) the chain is on the extracellular side. Residues 81 to 101 (GISWAFGGMIFILVYCTAGIS) form a helical membrane-spanning segment. The Cytoplasmic segment spans residues 102–124 (GGHINPAVTFGLFLASKVSLVRA). The NPA 1 signature appears at 106 to 108 (NPA). Residues 125–145 (VSYMVAQCLGATCGVGLVKVF) traverse the membrane as a helical segment. Residues 146–165 (QSTYYNRYGGGANMLSDGYN) are Extracellular-facing. Residues 166–186 (VGVGVGAEIIGTFVLVYTVFS) traverse the membrane as a helical segment. Residues 187–200 (ATDPKRNARDSHIP) are Cytoplasmic-facing. Residues 201-221 (VLAPLPIGFSVFMVHLATIPI) form a helical membrane-spanning segment. At 222–248 (TGTGINPARSFGAAVIYNNQKAWDDQW) the chain is on the extracellular side. The NPA 2 signature appears at 227–229 (NPA). Residues 249–269 (IFWVGPFVGAAIAAFYHQFVL) form a helical membrane-spanning segment. Residues 270-289 (RAGAMKAYGSVRSQLHELHA) are Cytoplasmic-facing. 2 positions are modified to phosphoserine: Ser279 and Ser282.

This sequence belongs to the MIP/aquaporin (TC 1.A.8) family. PIP (TC 1.A.8.11) subfamily. In terms of tissue distribution, expressed above ground, and in flower buds.

The protein resides in the cell membrane. Aquaporins facilitate the transport of water and small neutral solutes across cell membranes. This chain is Probable aquaporin PIP2-6 (PIP2-6), found in Arabidopsis thaliana (Mouse-ear cress).